The following is a 493-amino-acid chain: MTELNKLTLADSIKGLKNKDFTSTELVNAHIQQIEKHKNLNAYVTKTFDLALKGAQIADQNYAQNKARTLEGIPFAAKDLFCTKGIRTTACSNILKNFIPNYESSVTQNIFNNGGVMLGKTNMDEFAMGAANITSCFGNVINPWKANNDNSDLVPGGSSGGSAASVSGFMASAALGSDTGGSVRQPASFTGLVGFKPTYGRCSRYGMVSFASSLDQAGIFTRSVLDSAIMLEAMMGFDEKDSTSLKAEVPQLQSAIGSSVKNMKIGVPLSLGEGSIIEPDVMKMWQDTIELLKNAGTEIVDITLPYAKYGVAVYYVIAPAEASSNLSRYDGVRYGLRVERENMTLDEMYEMTRSAGFGEEVKRRIMIGTYVLSSSCMDAYYLKAQKVRSLVANDFNNAFTKVDTILLPAAPSEAFKIGEKQNDPTIMYLNDLFTIPASLAGLPCVSVPAGLSARGLPLGMQIIGKQLDEYNVLKVASTIESGVKHIKFEPKGF.

Catalysis depends on charge relay system residues Lys78 and Ser158. The Acyl-ester intermediate role is filled by Ser182.

This sequence belongs to the amidase family. GatA subfamily. As to quaternary structure, heterotrimer of A, B and C subunits.

It catalyses the reaction L-glutamyl-tRNA(Gln) + L-glutamine + ATP + H2O = L-glutaminyl-tRNA(Gln) + L-glutamate + ADP + phosphate + H(+). Allows the formation of correctly charged Gln-tRNA(Gln) through the transamidation of misacylated Glu-tRNA(Gln) in organisms which lack glutaminyl-tRNA synthetase. The reaction takes place in the presence of glutamine and ATP through an activated gamma-phospho-Glu-tRNA(Gln). This is Glutamyl-tRNA(Gln) amidotransferase subunit A from Rickettsia canadensis (strain McKiel).